The primary structure comprises 426 residues: MDDSFDIYEIKARQVLDSRGNPTVEAEVLTAGGGYGHTIVPSGASTGTFEAVELRDATEKYGGKSVLNAVSNVNDIIAQELIGEDARNQRLIDQIMLNLDGTENKGNLGANAILAVSLAVAKAAADTASLPLYKYIGGCNAYVMPAPMMNVLNGGQHAGNALDFQEFMIMPVGADSFAEAVRMCAETYQSLKKVVAEKYGKDAVNIGDEGGFAPPVKTIDEALALLLEGVKRAGYEDEIVFTLDSAASEFYDEKSGSYIVAGEKVSTDKLIDIYKEMVAQYPIVSIEDPLFEEDFEGFKIATQELKGIQIVGDDLFVTNTKRLKKGIEMGAANSLLLKVNQIGTLSESIDAANMAFRNGYSLVVSHRSGESEDSTIADLAVALNAGQIKTGAPARGERTAKYNQLIRIEEELQISKYAGKDFKVPF.

Q165 contributes to the (2R)-2-phosphoglycerate binding site. E209 acts as the Proton donor in catalysis. Residues D244, E287, and D313 each contribute to the Mg(2+) site. Residues K338, R367, S368, and K389 each coordinate (2R)-2-phosphoglycerate. The Proton acceptor role is filled by K338.

The protein belongs to the enolase family. It depends on Mg(2+) as a cofactor.

It localises to the cytoplasm. It is found in the secreted. The protein resides in the cell surface. The catalysed reaction is (2R)-2-phosphoglycerate = phosphoenolpyruvate + H2O. It participates in carbohydrate degradation; glycolysis; pyruvate from D-glyceraldehyde 3-phosphate: step 4/5. Catalyzes the reversible conversion of 2-phosphoglycerate (2-PG) into phosphoenolpyruvate (PEP). It is essential for the degradation of carbohydrates via glycolysis. The chain is Enolase from Methanococcus maripaludis (strain C7 / ATCC BAA-1331).